The sequence spans 577 residues: Arginine--tRNA ligase (577 aa).

The 'HIGH' region signature appears at 122 to 132; that stretch reads PNVAKEMHVGH.

Belongs to the class-I aminoacyl-tRNA synthetase family. As to quaternary structure, monomer.

It is found in the cytoplasm. It catalyses the reaction tRNA(Arg) + L-arginine + ATP = L-arginyl-tRNA(Arg) + AMP + diphosphate. This chain is Arginine--tRNA ligase, found in Salmonella enteritidis PT4 (strain P125109).